A 355-amino-acid chain; its full sequence is Protein RecA (355 aa).

72-79 (GPESSGKT) provides a ligand contact to ATP.

Belongs to the RecA family.

It localises to the cytoplasm. Its function is as follows. Can catalyze the hydrolysis of ATP in the presence of single-stranded DNA, the ATP-dependent uptake of single-stranded DNA by duplex DNA, and the ATP-dependent hybridization of homologous single-stranded DNAs. It interacts with LexA causing its activation and leading to its autocatalytic cleavage. This chain is Protein RecA, found in Wolbachia pipientis subsp. Culex pipiens (strain wPip).